A 218-amino-acid chain; its full sequence is MSAPQRRLPVYKKILEENKKKWMIKEFLEYRLSKYGYIDSEILKTPLGTRIVIYAERPSRIIGRKGAIVKEISNILTTKLGVENPQIDVIDISKIEAPEMFPKVVAYRIANAMAKGVRFRRVMFVAIRQLMEAGAKGFEIVVSGKLSTERARFEKQTYGKLYKIGYDAKNRVRRAVVHVLLKPGIYGIEVRIAPATLQYSDEYKIKPPVRPEAVQQQS.

Residues 2 to 71 (SAPQRRLPVY…IGRKGAIVKE (70 aa)) enclose the KH type-2 domain.

This sequence belongs to the universal ribosomal protein uS3 family. Part of the 30S ribosomal subunit.

Binds the lower part of the 30S subunit head. The sequence is that of Small ribosomal subunit protein uS3 from Pyrobaculum aerophilum (strain ATCC 51768 / DSM 7523 / JCM 9630 / CIP 104966 / NBRC 100827 / IM2).